The sequence spans 102 residues: Large ribosomal subunit protein bL21 (102 aa).

This sequence belongs to the bacterial ribosomal protein bL21 family. In terms of assembly, part of the 50S ribosomal subunit. Contacts protein L20.

Its function is as follows. This protein binds to 23S rRNA in the presence of protein L20. In Phytoplasma australiense, this protein is Large ribosomal subunit protein bL21.